The chain runs to 619 residues: Chaperone protein HscA homolog (619 aa).

Belongs to the heat shock protein 70 family.

Functionally, chaperone involved in the maturation of iron-sulfur cluster-containing proteins. Has a low intrinsic ATPase activity which is markedly stimulated by HscB. This Shewanella denitrificans (strain OS217 / ATCC BAA-1090 / DSM 15013) protein is Chaperone protein HscA homolog.